The primary structure comprises 278 residues: Sulfur carrier protein FdhD (278 aa).

Cys-124 acts as the Cysteine persulfide intermediate in catalysis.

The protein belongs to the FdhD family.

The protein localises to the cytoplasm. In terms of biological role, required for formate dehydrogenase (FDH) activity. Acts as a sulfur carrier protein that transfers sulfur from IscS to the molybdenum cofactor prior to its insertion into FDH. This is Sulfur carrier protein FdhD from Burkholderia cenocepacia (strain ATCC BAA-245 / DSM 16553 / LMG 16656 / NCTC 13227 / J2315 / CF5610) (Burkholderia cepacia (strain J2315)).